The following is a 45-amino-acid chain: Major cold shock protein (45 aa).

Residues 1–45 enclose the CSD domain; it reads EKGFGFISTENGQDVFAHFSAIQTNGFKTLEEGQKVEFDVEEGQR.

In terms of assembly, homodimer.

The protein localises to the cytoplasm. This is Major cold shock protein (cspA) from Streptococcus dysgalactiae.